The chain runs to 143 residues: Transcription antitermination protein NusB (143 aa).

Belongs to the NusB family.

In terms of biological role, involved in transcription antitermination. Required for transcription of ribosomal RNA (rRNA) genes. Binds specifically to the boxA antiterminator sequence of the ribosomal RNA (rrn) operons. The sequence is that of Transcription antitermination protein NusB from Desulforapulum autotrophicum (strain ATCC 43914 / DSM 3382 / VKM B-1955 / HRM2) (Desulfobacterium autotrophicum).